The following is a 709-amino-acid chain: DNA ligase (709 aa).

A disordered region spans residues 1-20; the sequence is MTATHRGAQADASAPAGPLP. Residues 52–56, 101–102, and E146 each bind NAD(+); these read DAEYD and SL. K148 functions as the N6-AMP-lysine intermediate in the catalytic mechanism. NAD(+) contacts are provided by R169, E205, K322, and K346. Residues C440, C443, C458, and C464 each contribute to the Zn(2+) site. The BRCT domain maps to 623–709; the sequence is KAPAPLSGKT…AEAGAAPAQE (87 aa).

The protein belongs to the NAD-dependent DNA ligase family. LigA subfamily. Mg(2+) is required as a cofactor. It depends on Mn(2+) as a cofactor.

The catalysed reaction is NAD(+) + (deoxyribonucleotide)n-3'-hydroxyl + 5'-phospho-(deoxyribonucleotide)m = (deoxyribonucleotide)n+m + AMP + beta-nicotinamide D-nucleotide.. DNA ligase that catalyzes the formation of phosphodiester linkages between 5'-phosphoryl and 3'-hydroxyl groups in double-stranded DNA using NAD as a coenzyme and as the energy source for the reaction. It is essential for DNA replication and repair of damaged DNA. This is DNA ligase from Cupriavidus necator (strain ATCC 17699 / DSM 428 / KCTC 22496 / NCIMB 10442 / H16 / Stanier 337) (Ralstonia eutropha).